A 569-amino-acid polypeptide reads, in one-letter code: Urease subunit alpha (569 aa).

Ni(2+) contacts are provided by His136, His138, and Lys219. Position 219 is an N6-carboxylysine (Lys219). Substrate is bound at residue His221. Positions 248 and 274 each coordinate Ni(2+). His322 serves as the catalytic Proton donor. Residue Asp362 coordinates Ni(2+).

This sequence belongs to the metallo-dependent hydrolases superfamily. Urease alpha subunit family. As to quaternary structure, heterotrimer of UreA (gamma), UreB (beta) and UreC (alpha) subunits. Three heterotrimers associate to form the active enzyme. The cofactor is Ni cation. Post-translationally, carboxylation allows a single lysine to coordinate two nickel ions.

It is found in the cytoplasm. The enzyme catalyses urea + 2 H2O + H(+) = hydrogencarbonate + 2 NH4(+). It participates in nitrogen metabolism; urea degradation; CO(2) and NH(3) from urea (urease route): step 1/1. In Microcystis aeruginosa (strain NIES-843 / IAM M-2473), this protein is Urease subunit alpha.